The sequence spans 569 residues: Sulfite reductase [NADPH] hemoprotein beta-component (569 aa).

Positions 434, 440, 479, and 483 each coordinate [4Fe-4S] cluster. Cys483 lines the siroheme pocket.

This sequence belongs to the nitrite and sulfite reductase 4Fe-4S domain family. As to quaternary structure, alpha(8)-beta(8). The alpha component is a flavoprotein, the beta component is a hemoprotein. Siroheme serves as cofactor. [4Fe-4S] cluster is required as a cofactor.

The enzyme catalyses hydrogen sulfide + 3 NADP(+) + 3 H2O = sulfite + 3 NADPH + 4 H(+). Its pathway is sulfur metabolism; hydrogen sulfide biosynthesis; hydrogen sulfide from sulfite (NADPH route): step 1/1. Component of the sulfite reductase complex that catalyzes the 6-electron reduction of sulfite to sulfide. This is one of several activities required for the biosynthesis of L-cysteine from sulfate. The protein is Sulfite reductase [NADPH] hemoprotein beta-component of Staphylococcus saprophyticus subsp. saprophyticus (strain ATCC 15305 / DSM 20229 / NCIMB 8711 / NCTC 7292 / S-41).